Consider the following 561-residue polypeptide: Arginine--tRNA ligase (561 aa).

The 'HIGH' region motif lies at 128 to 138 (ANPTGPLHVGH).

This sequence belongs to the class-I aminoacyl-tRNA synthetase family. In terms of assembly, monomer.

The protein localises to the cytoplasm. The enzyme catalyses tRNA(Arg) + L-arginine + ATP = L-arginyl-tRNA(Arg) + AMP + diphosphate. This Chromohalobacter salexigens (strain ATCC BAA-138 / DSM 3043 / CIP 106854 / NCIMB 13768 / 1H11) protein is Arginine--tRNA ligase.